A 555-amino-acid chain; its full sequence is Phosphomethylpyrimidine synthase (555 aa).

Substrate contacts are provided by residues asparagine 191, methionine 220, tyrosine 249, histidine 285, 305 to 307 (SRG), 346 to 349 (DGLR), and glutamate 385. Histidine 389 contacts Zn(2+). Tyrosine 412 contributes to the substrate binding site. Histidine 453 serves as a coordination point for Zn(2+). Residues cysteine 533, cysteine 536, and cysteine 541 each coordinate [4Fe-4S] cluster.

This sequence belongs to the ThiC family. In terms of assembly, homodimer. It depends on [4Fe-4S] cluster as a cofactor.

It catalyses the reaction 5-amino-1-(5-phospho-beta-D-ribosyl)imidazole + S-adenosyl-L-methionine = 4-amino-2-methyl-5-(phosphooxymethyl)pyrimidine + CO + 5'-deoxyadenosine + formate + L-methionine + 3 H(+). It participates in cofactor biosynthesis; thiamine diphosphate biosynthesis. Functionally, catalyzes the synthesis of the hydroxymethylpyrimidine phosphate (HMP-P) moiety of thiamine from aminoimidazole ribotide (AIR) in a radical S-adenosyl-L-methionine (SAM)-dependent reaction. The chain is Phosphomethylpyrimidine synthase from Ehrlichia ruminantium (strain Welgevonden).